The sequence spans 509 residues: H/ACA ribonucleoprotein complex subunit DKC1 (509 aa).

A disordered region spans residues 1–25; it reads MADAEAAMTFPKKHKKKKERKPLPE. A2 carries the N-acetylalanine modification. The interval 2–22 is nucleolar localization; it reads ADAEAAMTFPKKHKKKKERKP. Positions 11–20 are enriched in basic residues; that stretch reads PKKHKKKKER. Glycyl lysine isopeptide (Lys-Gly) (interchain with G-Cter in SUMO2) cross-links involve residues K21, K40, and K44. The active-site Nucleophile is the D126. Residue K192 forms a Glycyl lysine isopeptide (Lys-Gly) (interchain with G-Cter in SUMO2) linkage. The 76-residue stretch at 297–372 folds into the PUA domain; it reads HKRLVMKDSA…VVAKIKRVIM (76 aa). The segment at 381-509 is disordered; it reads WGLGPKASQK…KARAAEELSG (129 aa). A Phosphoserine modification is found at S388. Residues K395 and K425 each participate in a glycyl lysine isopeptide (Lys-Gly) (interchain with G-Cter in SUMO2) cross-link. Positions 416–425 are enriched in basic and acidic residues; it reads DYVDYSDSSK. The segment at 447–509 is nuclear and nucleolar localization; it reads KRKRDSDSDA…KARAAEELSG (63 aa). Residues S452 and S454 each carry the phosphoserine modification. Residue T460 is modified to Phosphothreonine. The span at 466 to 475 shows a compositional bias: basic residues; sequence RVKKEKKKKK. Positions 481 to 490 are enriched in acidic residues; it reads GEEAAEDGDG. S508 carries the phosphoserine modification.

This sequence belongs to the pseudouridine synthase TruB family. Part of the H/ACA small nucleolar ribonucleoprotein (H/ACA snoRNP) complex, which contains NHP2/NOLA2, GAR1/NOLA1, NOP10/NOLA3, and DKC1/NOLA4, which is presumed to be the catalytic subunit. The complex contains a stable core formed by binding of one or two NOP10-DKC1 heterodimers to NHP2; GAR1 subsequently binds to this core via DKC1. The complex binds a box H/ACA small nucleolar RNA (snoRNA), which may target the specific site of modification within the RNA substrate. During assembly, the complex contains NAF1 instead of GAR1/NOLA1. The complex also interacts with TERC, which contains a 3'-terminal domain related to the box H/ACA snoRNAs. Specific interactions with snoRNAs or TERC are mediated by GAR1 and NHP2. Associates with NOLC1/NOPP140. H/ACA snoRNPs interact with the SMN complex, consisting of SMN1 or SMN2, GEMIN2/SIP1, DDX20/GEMIN3, and GEMIN4. This is mediated by interaction between GAR1 and SMN1 or SMN2. The SMN complex may be required for correct assembly of the H/ACA snoRNP complex. Component of the telomerase holoenzyme complex composed of one molecule of TERT, one molecule of WRAP53/TCAB1, two molecules of H/ACA ribonucleoprotein complex subunits DKC1, NOP10, NHP2 and GAR1, and a telomerase RNA template component (TERC). The telomerase holoenzyme complex is associated with TEP1, SMG6/EST1A and POT1. Interacts with SHQ1; this interaction may lead to the stabilization of DKC1, from the time of its synthesis until its association with NOP10, NHP2, and NAF1 at the nascent H/ACA RNA. Interacts with HMBOX1. Interacts with DHX36.

It is found in the nucleus. The protein resides in the nucleolus. It localises to the cajal body. The catalysed reaction is uridine in 5S rRNA = pseudouridine in 5S rRNA. Catalytic subunit of H/ACA small nucleolar ribonucleoprotein (H/ACA snoRNP) complex, which catalyzes pseudouridylation of rRNA. This involves the isomerization of uridine such that the ribose is subsequently attached to C5, instead of the normal N1. Each rRNA can contain up to 100 pseudouridine ('psi') residues, which may serve to stabilize the conformation of rRNAs. Required for ribosome biogenesis and telomere maintenance. Also required for correct processing or intranuclear trafficking of TERC, the RNA component of the telomerase reverse transcriptase (TERT) holoenzyme. This Rattus norvegicus (Rat) protein is H/ACA ribonucleoprotein complex subunit DKC1 (Dkc1).